Here is a 428-residue protein sequence, read N- to C-terminus: Putative POM121-like protein 1 (428 aa).

Disordered stretches follow at residues 1–23 (MDSLWGPGAGSHPFGVHNSRLSP), 36–204 (KESG…KFPL), 254–293 (DCRPSRPSHTLSSLATGASGLPAVSKAPSMDAQQERHKSQ), 306–384 (TEVP…PSTL), and 402–428 (GPQPQLQQVPRGQNQRSQTSRTSSCPK). A compositionally biased stretch (basic and acidic residues) spans 44–62 (EQDKDPRVQENPGDQRRVP). Positions 106–117 (QTSQTSWTSSCT) are enriched in low complexity. Composition is skewed to polar residues over residues 118 to 129 (NRNAISSSYSST), 144 to 155 (SHCQLTLSSSKT), 260 to 269 (PSHTLSSLAT), 326 to 347 (FSSSDPLPATSSHSQDSAQVTS), and 403 to 415 (PQPQLQQVPRGQN). Positions 416–428 (QRSQTSRTSSCPK) are enriched in low complexity.

It belongs to the POM121 family.

The chain is Putative POM121-like protein 1 (POM121L1P) from Homo sapiens (Human).